The following is a 312-amino-acid chain: tRNA-cytidine(32) 2-sulfurtransferase (312 aa).

A PP-loop motif motif is present at residues 39–44 (SGGKDS). [4Fe-4S] cluster contacts are provided by cysteine 114, cysteine 117, and cysteine 205.

The protein belongs to the TtcA family. As to quaternary structure, homodimer. Mg(2+) serves as cofactor. It depends on [4Fe-4S] cluster as a cofactor.

It localises to the cytoplasm. The enzyme catalyses cytidine(32) in tRNA + S-sulfanyl-L-cysteinyl-[cysteine desulfurase] + AH2 + ATP = 2-thiocytidine(32) in tRNA + L-cysteinyl-[cysteine desulfurase] + A + AMP + diphosphate + H(+). The protein operates within tRNA modification. Catalyzes the ATP-dependent 2-thiolation of cytidine in position 32 of tRNA, to form 2-thiocytidine (s(2)C32). The sulfur atoms are provided by the cysteine/cysteine desulfurase (IscS) system. The polypeptide is tRNA-cytidine(32) 2-sulfurtransferase (Cupriavidus pinatubonensis (strain JMP 134 / LMG 1197) (Cupriavidus necator (strain JMP 134))).